The following is a 490-amino-acid chain: MRINPTTSGSEVSAVEKKNLGRIVKIIGPVLDVAFPPGKMPNIYNALVVQGRDNEQTNVTCEVQQLLGNNRVRAVAMSDTDGLMRGMEVIDTGAPISVPVGGSTLGRIFNVLGQPVDNLGPVDTNTTSPIHRSAPAFIQLDTKLSIFETGIKVVDLLAPYRRGGKIGLFGGAGVGKTVLIMELINNIAKAHGGVSVFGGVGERTREGNDLYLEMKESGVINEENIPESKVALVYGQMNEPPGARMRVGLTALTMAEYFRDVNEQDVLLFIDNIFRFVQAGSEVSALLGRMPSAVGYQPTLSTEMGSLQERITSTKEGSITSIQAVYVPADDLTDPAPATTFAHLDATTVLSRGLAAKGIYPAVDPLDSTSTMLQPRIVGEEHYETAQRVKQTLQRYKELQDIIAILGLDELSEEDRLTVARARKIERFLSQPFFVAEVFTGSPGKYVGLAETIRGFQLILSGELDGLPEQAFYLVGNIDEATAKAMNLKT.

Residue 170–177 (GGAGVGKT) participates in ATP binding.

It belongs to the ATPase alpha/beta chains family. As to quaternary structure, F-type ATPases have 2 components, CF(1) - the catalytic core - and CF(0) - the membrane proton channel. CF(1) has five subunits: alpha(3), beta(3), gamma(1), delta(1), epsilon(1). CF(0) has four main subunits: a(1), b(1), b'(1) and c(9-12).

It localises to the plastid. Its subcellular location is the chloroplast thylakoid membrane. The enzyme catalyses ATP + H2O + 4 H(+)(in) = ADP + phosphate + 5 H(+)(out). In terms of biological role, produces ATP from ADP in the presence of a proton gradient across the membrane. The catalytic sites are hosted primarily by the beta subunits. This chain is ATP synthase subunit beta, chloroplastic, found in Ipomoea quamoclit (Cypress vine).